A 142-amino-acid chain; its full sequence is Hemoglobin subunit theta-1 (142 aa).

The 141-residue stretch at 2-142 folds into the Globin domain; that stretch reads ALSAEDRALV…VISALVSEYR (141 aa). Positions 59 and 88 each coordinate heme b.

Belongs to the globin family.

The protein is Hemoglobin subunit theta-1 (HBQ1) of Homo sapiens (Human).